Reading from the N-terminus, the 389-residue chain is MESRADHAVPADEGHGATEPPRGRDRAALREGFTTGTAMTAGAVAALRHVFGLPFLPVLSVPLPPQEGVGVPGRLGVPVAEVLTEGDGATGVVIKDGGDDPDATHGARIETHVRLLPDATATLLLEGGTGVGRVTLPGLPVAVGEVAVNPGPRAQLEFAVREVCAAQGYGGGVRVTVRVPEGEAIARHTLNGRLGIVGGISILGTRGTVRPYSHEAWKAAIAQELSVARALGHRRACLSTGRRSETLLMRRYPDLPEQAFVQAADFVAFALGAAAERGFEALAWGCFFGKLVKLAQGLPHTHARTAPLDLPLLAQWCREAGVDEARVEAVAGANTAGQALDIITPDAACHTALDAVTRRAKAHAERFAGPGVGVTIHLFHLNGTELTSA.

The interval 1-25 (MESRADHAVPADEGHGATEPPRGRD) is disordered.

The protein belongs to the CbiD family.

It catalyses the reaction Co-precorrin-5B + S-adenosyl-L-methionine = Co-precorrin-6A + S-adenosyl-L-homocysteine. Its pathway is cofactor biosynthesis; adenosylcobalamin biosynthesis; cob(II)yrinate a,c-diamide from sirohydrochlorin (anaerobic route): step 6/10. Its function is as follows. Catalyzes the methylation of C-1 in cobalt-precorrin-5B to form cobalt-precorrin-6A. This Nitratidesulfovibrio vulgaris (strain ATCC 29579 / DSM 644 / CCUG 34227 / NCIMB 8303 / VKM B-1760 / Hildenborough) (Desulfovibrio vulgaris) protein is Cobalt-precorrin-5B C(1)-methyltransferase.